We begin with the raw amino-acid sequence, 449 residues long: Tubulin beta-2 chain (449 aa).

Residues glutamine 11 and glutamate 69 each coordinate GTP. Glutamate 69 serves as a coordination point for Mg(2+). Histidine 137 is subject to Methylhistidine. GTP contacts are provided by serine 138, glycine 142, threonine 143, glycine 144, asparagine 204, and asparagine 226.

Belongs to the tubulin family. In terms of assembly, dimer of alpha and beta chains. A typical microtubule is a hollow water-filled tube with an outer diameter of 25 nm and an inner diameter of 15 nM. Alpha-beta heterodimers associate head-to-tail to form protofilaments running lengthwise along the microtubule wall with the beta-tubulin subunit facing the microtubule plus end conferring a structural polarity. Microtubules usually have 13 protofilaments but different protofilament numbers can be found in some organisms and specialized cells. Requires Mg(2+) as cofactor.

The protein resides in the cytoplasm. The protein localises to the cytoskeleton. In terms of biological role, tubulin is the major constituent of microtubules, a cylinder consisting of laterally associated linear protofilaments composed of alpha- and beta-tubulin heterodimers. Microtubules grow by the addition of GTP-tubulin dimers to the microtubule end, where a stabilizing cap forms. Below the cap, tubulin dimers are in GDP-bound state, owing to GTPase activity of alpha-tubulin. The protein is Tubulin beta-2 chain (tubC) of Emericella nidulans (strain FGSC A4 / ATCC 38163 / CBS 112.46 / NRRL 194 / M139) (Aspergillus nidulans).